The sequence spans 397 residues: Tryptophan synthase beta chain (397 aa).

The residue at position 91 (Lys-91) is an N6-(pyridoxal phosphate)lysine.

It belongs to the TrpB family. In terms of assembly, tetramer of two alpha and two beta chains. Requires pyridoxal 5'-phosphate as cofactor.

It catalyses the reaction (1S,2R)-1-C-(indol-3-yl)glycerol 3-phosphate + L-serine = D-glyceraldehyde 3-phosphate + L-tryptophan + H2O. It participates in amino-acid biosynthesis; L-tryptophan biosynthesis; L-tryptophan from chorismate: step 5/5. Functionally, the beta subunit is responsible for the synthesis of L-tryptophan from indole and L-serine. The polypeptide is Tryptophan synthase beta chain (Bacillus thuringiensis (strain Al Hakam)).